We begin with the raw amino-acid sequence, 440 residues long: Gap junction alpha-8 protein (440 aa).

Residues 2–12 (GDWSFLGNILE) lie within the membrane without spanning it. Over 13 to 21 (EVNEHSTVI) the chain is Cytoplasmic. A helical membrane pass occupies residues 22–42 (GRVWLTVLFIFRILILGTAAE). The Extracellular portion of the chain corresponds to 43 to 71 (FVWGDEQSDFVCNTQQPGCENVCYDEAFP). 3 cysteine pairs are disulfide-bonded: cysteine 54/cysteine 201, cysteine 61/cysteine 195, and cysteine 65/cysteine 190. A helical transmembrane segment spans residues 72–92 (ISHIRLWVLQIIFVSTPSLMY). Topologically, residues 93–161 (VGHAVHHVRM…GTLLRTYVCH (69 aa)) are cytoplasmic. A disordered region spans residues 111–143 (AEELCQQSRSNGGERVPIAPDQASIRKSSSSSK). The chain crosses the membrane as a helical span at residues 162–182 (IIFKTLFEVGFIVGHYFLYGF). The Extracellular segment spans residues 183 to 210 (RILPLYRCSRWPCPNVVDCFVSRPTEKT). Residues 211-231 (IFILFMLSVAFVSLFLNIMEM) form a helical membrane-spanning segment. Topologically, residues 232–440 (SHLGMKGIRS…SRARSDDLTI (209 aa)) are cytoplasmic. The segment at 334–440 (GAQEVEREEQ…SRARSDDLTI (107 aa)) is disordered. Composition is skewed to basic and acidic residues over residues 353–364 (VGEKKQEAEKVA) and 375–399 (DGEKVETPGVGKDDEKEELQAEKVT). Positions 423–432 (LSRLSKASSR) are enriched in low complexity.

This sequence belongs to the connexin family. Alpha-type (group II) subfamily. In terms of assembly, a hemichannel or connexon is composed of a hexamer of connexins. A functional gap junction is formed by the apposition of two hemichannels. Forms heteromeric channels with GJA3. As to expression, detected in eye lens (at protein level).

It is found in the cell membrane. The protein localises to the cell junction. It localises to the gap junction. Functionally, structural component of eye lens gap junctions. Gap junctions are dodecameric channels that connect the cytoplasm of adjoining cells. They are formed by the docking of two hexameric hemichannels, one from each cell membrane. Small molecules and ions diffuse from one cell to a neighboring cell via the central pore. The polypeptide is Gap junction alpha-8 protein (Gja8) (Rattus norvegicus (Rat)).